A 577-amino-acid polypeptide reads, in one-letter code: Arginine--tRNA ligase (577 aa).

The 'HIGH' region signature appears at 122–132 (PNVAKEMHVGH).

Belongs to the class-I aminoacyl-tRNA synthetase family. In terms of assembly, monomer.

The protein resides in the cytoplasm. It carries out the reaction tRNA(Arg) + L-arginine + ATP = L-arginyl-tRNA(Arg) + AMP + diphosphate. This chain is Arginine--tRNA ligase, found in Escherichia coli O81 (strain ED1a).